Consider the following 433-residue polypeptide: Glutamate-1-semialdehyde 2,1-aminomutase (433 aa).

N6-(pyridoxal phosphate)lysine is present on Lys-271.

Belongs to the class-III pyridoxal-phosphate-dependent aminotransferase family. HemL subfamily. As to quaternary structure, homodimer. Pyridoxal 5'-phosphate is required as a cofactor.

Its subcellular location is the cytoplasm. It carries out the reaction (S)-4-amino-5-oxopentanoate = 5-aminolevulinate. It participates in porphyrin-containing compound metabolism; protoporphyrin-IX biosynthesis; 5-aminolevulinate from L-glutamyl-tRNA(Glu): step 2/2. It functions in the pathway porphyrin-containing compound metabolism; chlorophyll biosynthesis. This is Glutamate-1-semialdehyde 2,1-aminomutase from Prochlorococcus marinus (strain AS9601).